A 139-amino-acid chain; its full sequence is Thioredoxin-like protein Clot (139 aa).

The region spanning 1–136 (MTVEKVDATV…LADKVDAVVN (136 aa)) is the Thioredoxin domain. Catalysis depends on nucleophile residues Cys-49 and Cys-52. The cysteines at positions 49 and 52 are disulfide-linked.

It belongs to the thioredoxin family.

Its function is as follows. Probable thiol-disulfide oxidoreductase that may participate in various redox reactions. The chain is Thioredoxin-like protein Clot from Oryza sativa subsp. japonica (Rice).